Consider the following 112-residue polypeptide: uncharacterized protein (112 aa).

This is an uncharacterized protein from Acanthamoeba polyphaga mimivirus (APMV).